Reading from the N-terminus, the 177-residue chain is Large ribosomal subunit protein uL6 (177 aa).

This sequence belongs to the universal ribosomal protein uL6 family. Part of the 50S ribosomal subunit.

In terms of biological role, this protein binds to the 23S rRNA, and is important in its secondary structure. It is located near the subunit interface in the base of the L7/L12 stalk, and near the tRNA binding site of the peptidyltransferase center. This Rickettsia prowazekii (strain Madrid E) protein is Large ribosomal subunit protein uL6.